Here is a 93-residue protein sequence, read N- to C-terminus: MKKPLILLAMVVALMILPFFINHGGEFGGSDGEAESQIQVVAPDYQPWFQPLYEPASGEIESLLFTLQGSLGAAVIFYILGYARGRQRRDDRV.

A run of 2 helical transmembrane segments spans residues 5–25 and 63–83; these read LILL…NHGG and LLFT…LGYA.

Belongs to the CbiN family. As to quaternary structure, forms an energy-coupling factor (ECF) transporter complex composed of an ATP-binding protein (A component, CbiO), a transmembrane protein (T component, CbiQ) and 2 possible substrate-capture proteins (S components, CbiM and CbiN) of unknown stoichimetry.

It is found in the cell inner membrane. It participates in cofactor biosynthesis; adenosylcobalamin biosynthesis. Part of the energy-coupling factor (ECF) transporter complex CbiMNOQ involved in cobalt import. The polypeptide is Cobalt transport protein CbiN (Klebsiella pneumoniae (strain 342)).